A 316-amino-acid polypeptide reads, in one-letter code: uncharacterized protein (316 aa).

The region spanning 26–98 (ERIDRFLAGA…IPLDVVYEDA (73 aa)) is the S4 RNA-binding domain. The active site involves Asp148.

This sequence belongs to the pseudouridine synthase RluA family.

The enzyme catalyses a uridine in RNA = a pseudouridine in RNA. This is an uncharacterized protein from Chloroflexus aurantiacus (strain ATCC 29366 / DSM 635 / J-10-fl).